The primary structure comprises 423 residues: Ribosome biogenesis protein WDR12 homolog (423 aa).

Residues V10–E93 are ubiquitin-like (UBL) domain. 7 WD repeats span residues L105–I142, G144–E186, G193–D232, G253–E291, S293–V332, G338–Y378, and G382–M420.

It belongs to the WD repeat WDR12/YTM1 family.

The protein localises to the nucleus. Its subcellular location is the nucleolus. The protein resides in the nucleoplasm. Required for maturation of ribosomal RNAs and formation of the large ribosomal subunit. This is Ribosome biogenesis protein WDR12 homolog from Drosophila willistoni (Fruit fly).